Reading from the N-terminus, the 450-residue chain is Putative serine/threonine-protein kinase R517/R518 (450 aa).

In terms of domain architecture, Protein kinase spans 9–290; the sequence is KMTDTVLGKG…WSELFHHYWF (282 aa). Residues 15–23 and K38 each bind ATP; that span reads LGKGGFSEV. The active-site Proton acceptor is D140.

This sequence belongs to the protein kinase superfamily. Ser/Thr protein kinase family.

The catalysed reaction is L-seryl-[protein] + ATP = O-phospho-L-seryl-[protein] + ADP + H(+). It catalyses the reaction L-threonyl-[protein] + ATP = O-phospho-L-threonyl-[protein] + ADP + H(+). The sequence is that of Putative serine/threonine-protein kinase R517/R518 from Acanthamoeba polyphaga mimivirus (APMV).